Consider the following 506-residue polypeptide: Anaerobic nitric oxide reductase transcription regulator NorR (506 aa).

4-aspartylphosphate is present on aspartate 57. Residues 187-416 (MIGLSPNMMQ…LEHAIHRAVV (230 aa)) form the Sigma-54 factor interaction domain. ATP contacts are provided by residues 215-222 (GETGTGKE) and 278-287 (ADNGTLFLDE). A DNA-binding region (H-T-H motif) is located at residues 481-500 (WAACARALETDVANLHRLAK).

Its pathway is nitrogen metabolism; nitric oxide reduction. In terms of biological role, required for the expression of anaerobic nitric oxide (NO) reductase, acts as a transcriptional activator for at least the norVW operon. Activation also requires sigma-54. The polypeptide is Anaerobic nitric oxide reductase transcription regulator NorR (Citrobacter koseri (strain ATCC BAA-895 / CDC 4225-83 / SGSC4696)).